The sequence spans 718 residues: MVSIRRSFEAYVDDMNIITVLIPAEQKEIMTPPFRLETEITDFPLAVREEYSLEAKYKYVCVSDHPVTFGKIHCVRASSGHKTDLQIGAVIRTAAFDDEFYYDGELGAVYTADHTVFKVWAPAATSAAVKLSHPNKSGRTFQMTRLEKGVYAVTVTGDLHGYEYLFCICNNSEWMETVDQYAKAVTVNGEKGVVLRPDQMKWTAPLKPFSHPVDAVIYETHLRDFSIHENSGMINKGKYLALTETDTQTANGSSSGLAYVKELGVTHVELLPVNDFAGVDEEKPLDAYNWGYNPLHFFAPEGSYASNPHDPQTRKTELKQMINTLHQHGLRVILDVVFNHVYKRENSPFEKTVPGYFFRHDECGMPSNGTGVGNDIASERRMARKFIADCVVYWLEEYNVDGFRFDLLGILDIDTVLYMKEKATKAKPGILLFGEGWDLATPLPHEQKAALANAPRMPGIGFFNDMFRDAVKGNTFHLKATGFALGNGESAQAVMHGIAGSSGWKALAPIVPEPSQSINYVESHDNHTFWDKMSFALPQENDSRKRSRQRLAAAIILLAQGVPFIHSGQEFFRTKQGVENSYQSSDSINQLDWDRRETFKEDVHYIRRLISLRKAHPAFRLRSAADIQRHLECLTLKEHLIAYRLYDLDEVDEWKDIIVIHHASPDSVEWRLPNDIPYRLLCDPSGFQEDPTEIKKTVAVNGIGTVILYLASDLKSFA.

The active-site Nucleophile is the D406. The active-site Proton donor is the E435.

It belongs to the glycosyl hydrolase 13 family.

The enzyme catalyses Hydrolysis of (1-&gt;6)-alpha-D-glucosidic linkages in pullulan, amylopectin and glycogen, and in the alpha- and beta-limit dextrins of amylopectin and glycogen.. This Bacillus subtilis (strain 168) protein is Pullulanase (amyX).